The sequence spans 284 residues: L-fucose dehydrogenase (284 aa).

The NAD(+) site is built by arginine 19, isoleucine 21, aspartate 40, lysine 41, aspartate 62, valine 63, asparagine 89, tyrosine 154, lysine 158, isoleucine 187, threonine 189, and leucine 191.

Belongs to the short-chain dehydrogenases/reductases (SDR) family.

The catalysed reaction is L-fucose + NAD(+) = L-fucono-1,5-lactone + NADH + H(+). It catalyses the reaction D-arabinose + NAD(+) = D-arabinono-1,5-lactone + NADH + H(+). The enzyme catalyses L-galactose + NAD(+) = L-galactono-1,5-lactone + NADH + H(+). It functions in the pathway carbohydrate degradation; L-fucose degradation. Its function is as follows. Catalyzes the NAD(+)-dependent oxidation of L-fucose, yielding L-fucono-1,5-lactone, which rapidly converts spontaneously to L-fucone-1,4-lactone. Can also act on D-arabinose and L-galactose, with lower catalytic efficiency. Does not use NADPH. May be the initial enzyme of the putative L-fucose degradation pathway in mammals. The protein is L-fucose dehydrogenase (HSD17B14) of Oryctolagus cuniculus (Rabbit).